Reading from the N-terminus, the 184-residue chain is TRAF-interacting protein with FHA domain-containing protein A (184 aa).

A Phosphothreonine modification is found at Thr-9. An FHA domain is found at 47 to 103 (VKFGRNSNMCQYTFQDKQVSRIQFVLQPFKQFNSSVLSFEIKNMSKKTSLMVDNQEL). The disordered stretch occupies residues 152 to 184 (NNWPTQNPIPEDGMYSSYFTHRSSPSEMDENEL). The span at 168–177 (SYFTHRSSPS) shows a compositional bias: polar residues.

The protein belongs to the TIFA family. Homooligomer; homooligomerizes following phosphorylation at Thr-9. Interacts with IRAK1, TRAF2 and TRAF6. Interacts with TIFAB; binding to TIFAB inhibits TRAF6 activation, possibly by inducing a conformational change in TIFA. Interacts with ZCCHC11; binding to ZCCHC11 suppresses the TRAF6-dependent activation of NF-kappa-B. Post-translationally, phosphorylated at Thr-9 following detection of ADP-D-glycero-beta-D-manno-heptose (ADP-Heptose) by ALPK1. Phosphorylation at Thr-9 by ALPK1 leads to the formation of an intermolecular binding between the FHA domain and phosphorylated Thr-9, promoting TIFA oligomerization and TIFA-mediated NF-kappa-B activation. As to expression, highly expressed in the spleen and at lower levels in heart, brain, lung, liver, kidney and testes.

The protein localises to the cytoplasm. Its function is as follows. Adapter molecule that plays a key role in the activation of pro-inflammatory NF-kappa-B signaling following detection of bacterial pathogen-associated molecular pattern metabolites (PAMPs). Promotes activation of an innate immune response by inducing the oligomerization and polyubiquitination of TRAF6, which leads to the activation of TAK1 and IKK through a proteasome-independent mechanism. TIFA-dependent innate immune response is triggered by ADP-D-glycero-beta-D-manno-heptose (ADP-Heptose), a potent PAMP present in all Gram-negative and some Gram-positive bacteria: ADP-Heptose is recognized by ALPK1, which phosphorylates TIFA at Thr-9, leading to TIFA homooligomerization and subsequent activation of pro-inflammatory NF-kappa-B signaling. This Mus musculus (Mouse) protein is TRAF-interacting protein with FHA domain-containing protein A.